Consider the following 368-residue polypeptide: MTTLTTTPRADGFHMPAEWAPHSQTWMVWPERPDNWRNGGKPAQAAFTAVAKAIAQFEPVTVCVSAAQYENARARLDDDNIRLVEITTDDAWVRDTGPTFVINGRGEVRGVDWTFNAWGGFDGGLYWPWQRDDQVARKILDIEGCKRYRTEGFVLEGGSIHVDGEGTLITTEECLLNRNRNPHLSREEIEAVLREHLAIDTVIWLPEGLYNDETDGHVDNFCCYVRPGEVLLAWTDDQNDPNYPRCQAAMRVLESVRDAKGRQLIVHKMPIPGPIHASEEECAGVDAAEGSQERSPAVRLAGSYVNFLIVNGGIVAPSFDDPKDAEARAILQQVFPEHRVVMVPGREILLGGGNIHCITQQQPAPQGA.

Residue Cys357 is the Amidino-cysteine intermediate of the active site.

The protein belongs to the agmatine deiminase family. As to quaternary structure, homodimer.

The catalysed reaction is agmatine + H2O = N-carbamoylputrescine + NH4(+). It participates in amine and polyamine biosynthesis; putrescine biosynthesis via agmatine pathway; N-carbamoylputrescine from agmatine: step 1/1. Functionally, mediates the hydrolysis of agmatine into N-carbamoylputrescine in the arginine decarboxylase (ADC) pathway of putrescine biosynthesis, a basic polyamine. The sequence is that of Agmatine deiminase from Ectopseudomonas mendocina (strain ymp) (Pseudomonas mendocina).